The primary structure comprises 105 residues: Late embryogenesis abundant protein Lea5-A (105 aa).

Belongs to the LEA type 3 family.

The chain is Late embryogenesis abundant protein Lea5-A (LEA5-A) from Gossypium hirsutum (Upland cotton).